Here is a 192-residue protein sequence, read N- to C-terminus: Elongation factor P (192 aa).

This sequence belongs to the elongation factor P family.

Its subcellular location is the cytoplasm. It participates in protein biosynthesis; polypeptide chain elongation. In terms of biological role, involved in peptide bond synthesis. Stimulates efficient translation and peptide-bond synthesis on native or reconstituted 70S ribosomes in vitro. Probably functions indirectly by altering the affinity of the ribosome for aminoacyl-tRNA, thus increasing their reactivity as acceptors for peptidyl transferase. This is Elongation factor P (efp) from Borreliella burgdorferi (strain ATCC 35210 / DSM 4680 / CIP 102532 / B31) (Borrelia burgdorferi).